The primary structure comprises 715 residues: Macrolide export ATP-binding/permease protein MacB (715 aa).

Positions 4 to 245 constitute an ABC transporter domain; it reads IELQDIRKTY…VSKAAPAQSK (242 aa). 40-47 is an ATP binding site; the sequence is GTSGSGKT. The segment at 229 to 251 is disordered; sequence AVGDMPQVSKAAPAQSKPVHSAM. 4 helical membrane passes run 277 to 297, 592 to 612, 639 to 659, and 681 to 701; these read AALTTLGIIIGVAAVIAMMEI, LLLAVALISLIVGGVGIMNIM, QFLFEAVLLCFLGGAVGILVG, and ILAAVGVSATVGIVFGYYPAW.

This sequence belongs to the ABC transporter superfamily. Macrolide exporter (TC 3.A.1.122) family. In terms of assembly, homodimer.

Its subcellular location is the cell inner membrane. In terms of biological role, non-canonical ABC transporter that contains transmembrane domains (TMD), which form a pore in the inner membrane, and an ATP-binding domain (NBD), which is responsible for energy generation. Confers resistance against macrolides. The sequence is that of Macrolide export ATP-binding/permease protein MacB from Syntrophobacter fumaroxidans (strain DSM 10017 / MPOB).